The following is a 69-amino-acid chain: Pancreatic propolypeptide YG (69 aa).

It belongs to the NPY family.

The protein localises to the secreted. This chain is Pancreatic propolypeptide YG, found in Lophius americanus (American angler).